The sequence spans 287 residues: MNFIGKFLGLIIGWKLGGFFGAICGVILGHLGDKKLYELGTVNSSFFKSKITRQSLFMQTTFAVLGHLSKAKGRVTEDDIQLASHLMQQMQLDDANRRLAQEAFTRGKAADFPLRQVIREFRLGCGQRADLLRMFLHVQVQAAFADAQLDQSEKDVLYIVGEELGLSRFQFEQMLAMEFAARQFSRAGYQQQNRYQRDYGYQQHQQQYGGYQQQSGPTVDDAYKVLGVSATDDQQTVKRAYRRLMNENHPDKLVAKGLPKEMLEMAKEKTQQIQSAYDLICKTKGWK.

Over M1–K6 the chain is Periplasmic. The helical transmembrane segment at F7–H30 threads the bilayer. Residues L31–K287 lie on the Cytoplasmic side of the membrane. One can recognise a J domain in the interval D221–K287.

Homodimer.

The protein localises to the cell inner membrane. Functionally, regulatory DnaK co-chaperone. Direct interaction between DnaK and DjlA is needed for the induction of the wcaABCDE operon, involved in the synthesis of a colanic acid polysaccharide capsule, possibly through activation of the RcsB/RcsC phosphotransfer signaling pathway. The colanic acid capsule may help the bacterium survive conditions outside the host. The protein is Co-chaperone protein DjlA of Pasteurella multocida (strain Pm70).